A 376-amino-acid chain; its full sequence is Probable ribonucleoside-diphosphate reductase small subunit 048L (376 aa).

Positions 110, 140, and 143 each coordinate Fe cation. Tyr147 is an active-site residue. The Fe cation site is built by Glu217, Glu251, and His254.

Belongs to the ribonucleoside diphosphate reductase small chain family. In terms of assembly, heterotetramer composed of a homodimer of the large subunit (R1) and a homodimer of the small subunit (R2). Larger multisubunit protein complex are also active, composed of (R1)n(R2)n. Fe cation serves as cofactor.

It catalyses the reaction a 2'-deoxyribonucleoside 5'-diphosphate + [thioredoxin]-disulfide + H2O = a ribonucleoside 5'-diphosphate + [thioredoxin]-dithiol. Functionally, ribonucleoside-diphosphate reductase holoenzyme provides the precursors necessary for viral DNA synthesis. Allows virus growth in non-dividing cells. Catalyzes the biosynthesis of deoxyribonucleotides from the corresponding ribonucleotides. In Invertebrate iridescent virus 3 (IIV-3), this protein is Probable ribonucleoside-diphosphate reductase small subunit 048L.